The following is a 478-amino-acid chain: MRYEPVIGLELHIQLNTHSKLFSPSSAAFGAEANTHVNEIDLAYPGVLPVLNEQALASAVLFGLALGSRIHSSAVFMRKNYFYPDSPKGYQISQLNDAVILGGQVSIDVDGATQTVRINRGQLEEDAGKSVHDIFSDRTGIDLNRAGVPLIELVSEPDMHSAAAAVAYMRKIHHLVRYLGISDGNMQEGSFRCDANVSIRPVGSKELNARVELKNINSFRFVAQAIQIEIERQSDILDAGGSVEQETRLFDPEKMQTRTMRSKENANDYRYFPDPDLLPLHLSAETIEHIRAQLPELPDARAQRYRKDYQLDDETIAFLVQTRMIADYFDAVVAKCHDAKLAANWISVELARLLNEHHLSFEQNPVSAEQFSQLLLKIHDDTISAQNGKKVLDYLWQHADADVDAVIDTQGLRQISDDQALKTWAAEVLAAYPKQVADYRGGQEKLLGFFVGQVMKKSRGKANPKTVNDIISQMLQAE.

It belongs to the GatB/GatE family. GatB subfamily. In terms of assembly, heterotrimer of A, B and C subunits.

It catalyses the reaction L-glutamyl-tRNA(Gln) + L-glutamine + ATP + H2O = L-glutaminyl-tRNA(Gln) + L-glutamate + ADP + phosphate + H(+). The enzyme catalyses L-aspartyl-tRNA(Asn) + L-glutamine + ATP + H2O = L-asparaginyl-tRNA(Asn) + L-glutamate + ADP + phosphate + 2 H(+). Allows the formation of correctly charged Asn-tRNA(Asn) or Gln-tRNA(Gln) through the transamidation of misacylated Asp-tRNA(Asn) or Glu-tRNA(Gln) in organisms which lack either or both of asparaginyl-tRNA or glutaminyl-tRNA synthetases. The reaction takes place in the presence of glutamine and ATP through an activated phospho-Asp-tRNA(Asn) or phospho-Glu-tRNA(Gln). This Dichelobacter nodosus (strain VCS1703A) protein is Aspartyl/glutamyl-tRNA(Asn/Gln) amidotransferase subunit B.